The following is a 67-amino-acid chain: Large ribosomal subunit protein eL38 (67 aa).

Belongs to the eukaryotic ribosomal protein eL38 family.

The chain is Large ribosomal subunit protein eL38 (rpl38e) from Aeropyrum pernix (strain ATCC 700893 / DSM 11879 / JCM 9820 / NBRC 100138 / K1).